The sequence spans 82 residues: UPF0213 protein MW0443 (82 aa).

Residues 2-77 form the GIY-YIG domain; sequence DSHFVYIVKC…KTYTRQKKLR (76 aa).

It belongs to the UPF0213 family.

This chain is UPF0213 protein MW0443, found in Staphylococcus aureus (strain MW2).